The chain runs to 566 residues: MTTREYDYIICGAGSAGNVLATRLTEDPNVTVLLLEAGGPDYRFDFRTQMPAALAYPLQGRRYNWAYETDPEPHMDNRRMECGRGKGLGGSSLINGMCYIRGNALDYDNWSTHQGLERWTYLDCLPYFRKAETRDVGPNDYHGGDGPVSVTTSKPGANPLFEAMVEAGVQAGYPRTDDLNGYQQEGFGPMDRTVTPKGRRASTARGYLDQAKTRPNLEIVTHALADRILFDGKRASGVAYLRGSERATAHARREVLVCSGAIASPQLLQRSGVGPGAWLKELDIPIVLDLPGVGQNLQDHLEMYIQYECKEPVSLYPALKWWNQPKIGLEWMLNGTGLGASNHFEAGGFIRTRDDDPWPNIQYHFLPVAINYNGSNAIEMHGFQAHVGSMRSPSRGRVKLRSRDPNDHPSILFNYMAEALDWREFRDAIRATREIMRQPALDRYRGRELNPGADCRSDKELDTFVRARAETAFHPSCSCKMGYDDMAVVDDEGRVHGLDGLRVVDASIMPIITTGNLNAPTIMIAEKIADRIRGREPLARANVAYYVANGAPARNVAKAVRQPETA.

7–36 lines the FAD pocket; that stretch reads DYIICGAGSAGNVLATRLTEDPNVTVLLLE. Residues 185-204 form a disordered region; it reads EGFGPMDRTVTPKGRRASTA. The active-site Proton acceptor is His-474.

The protein belongs to the GMC oxidoreductase family. FAD is required as a cofactor.

The catalysed reaction is choline + A = betaine aldehyde + AH2. It carries out the reaction betaine aldehyde + NAD(+) + H2O = glycine betaine + NADH + 2 H(+). The protein operates within amine and polyamine biosynthesis; betaine biosynthesis via choline pathway; betaine aldehyde from choline (cytochrome c reductase route): step 1/1. Functionally, involved in the biosynthesis of the osmoprotectant glycine betaine. Catalyzes the oxidation of choline to betaine aldehyde and betaine aldehyde to glycine betaine at the same rate. The protein is Oxygen-dependent choline dehydrogenase of Burkholderia vietnamiensis (strain G4 / LMG 22486) (Burkholderia cepacia (strain R1808)).